The primary structure comprises 185 residues: ATP-dependent protease subunit HslV (185 aa).

The active site involves Thr13. Na(+) is bound by residues Gly167, Cys170, and Thr173.

This sequence belongs to the peptidase T1B family. HslV subfamily. A double ring-shaped homohexamer of HslV is capped on each side by a ring-shaped HslU homohexamer. The assembly of the HslU/HslV complex is dependent on binding of ATP.

The protein resides in the cytoplasm. The catalysed reaction is ATP-dependent cleavage of peptide bonds with broad specificity.. Its activity is regulated as follows. Allosterically activated by HslU binding. In terms of biological role, protease subunit of a proteasome-like degradation complex believed to be a general protein degrading machinery. The polypeptide is ATP-dependent protease subunit HslV (Sinorhizobium medicae (strain WSM419) (Ensifer medicae)).